Reading from the N-terminus, the 232-residue chain is uncharacterized protein (232 aa).

The chain crosses the membrane as a helical span at residues 10–32 (GLTIYLYPVIAWIILVTKIESGL).

It localises to the membrane. This is an uncharacterized protein from Archaeoglobus fulgidus (strain ATCC 49558 / DSM 4304 / JCM 9628 / NBRC 100126 / VC-16).